The following is a 575-amino-acid chain: MMYIRRLNDQTANQIAAGEVVERPASVVKELIENSIDAHASCIRVDILQGGAKQIRIQDDGDGIHPEDLVLALERHATSKIAKIDDLQDVTTLGFRGEALASISAVSRLTLTSRQKNAEMGYRISNISHKIMTPVPAAHPQGTTIDVQDLFYNTPARRKFLRSPATEFQHIRRIIERLALSHFTTEFLLHHNEKEIIHFKSATTISGQENRIKSILGDVFMQSALAIEFSQSGLTLKGYIAEAAYTRSQPDLQYIYVNGRFVRDKLIAQALRQAYHDVLFHGRHPAYVLYLEIDPAFVDINVHPTKHEVRFRDPQWVRDFLIHAVKTALAQTKPGIAHPLPQSTAEYNPITNFAPTPLIEGQGNLSLIQEQPAPYTQTIVHKHPLGHALAQLQGIYILSQNEKGLVIVDMHAAHERILYEKMKKQLAEVGLVMQSLLVPINLSLNPQEITAWQTNKALFARLGFEIESFGPDKIVVRRHPSLLKPKNLENLIRDVLADLITHNTTSRVGERINAVLATLACHAALRAPHYLTIEEMEALLREMEKTEHGGLCNHGRPTWKQFDIAELDTFFLRGQ.

This sequence belongs to the DNA mismatch repair MutL/HexB family.

In terms of biological role, this protein is involved in the repair of mismatches in DNA. It is required for dam-dependent methyl-directed DNA mismatch repair. May act as a 'molecular matchmaker', a protein that promotes the formation of a stable complex between two or more DNA-binding proteins in an ATP-dependent manner without itself being part of a final effector complex. The chain is DNA mismatch repair protein MutL from Coxiella burnetii (strain CbuG_Q212) (Coxiella burnetii (strain Q212)).